The following is a 156-amino-acid chain: Transcription factor MafF (156 aa).

The segment at 51-76 (RLKQRRRTLKNRGYAASCRVKRVCQK) is basic motif. In terms of domain architecture, bZIP spans 51–114 (RLKQRRRTLK…DALRGKCEAL (64 aa)). The interval 79–93 (LQKQKSELEREVDKL) is leucine-zipper.

Belongs to the bZIP family. Maf subfamily. In terms of assembly, monomer and homo- or heterodimer. Interacts with MIP. Forms high affinity heterodimers with members of the CNC-bZIP family such as NFE2L1/NRF1. As to expression, highly expressed in the lung, lower expression in the brain, thymus, liver, spleen, intestine, kidney, heart, muscle, and ovary. Not significantly expressed in hematopoietic cells.

The protein resides in the nucleus. Since they lack a putative transactivation domain, the small Mafs behave as transcriptional repressors when they dimerize among themselves. However, they seem to serve as transcriptional activators by dimerizing with other (usually larger) basic-zipper proteins, such as NFE2L1/NRF1, and recruiting them to specific DNA-binding sites. Interacts with the upstream promoter region of the oxytocin receptor gene. May be a transcriptional enhancer in the up-regulation of the oxytocin receptor gene at parturition. This Mus musculus (Mouse) protein is Transcription factor MafF (Maff).